The following is a 178-amino-acid chain: ATP synthase subunit delta (178 aa).

This sequence belongs to the ATPase delta chain family. F-type ATPases have 2 components, F(1) - the catalytic core - and F(0) - the membrane proton channel. F(1) has five subunits: alpha(3), beta(3), gamma(1), delta(1), epsilon(1). F(0) has three main subunits: a(1), b(2) and c(10-14). The alpha and beta chains form an alternating ring which encloses part of the gamma chain. F(1) is attached to F(0) by a central stalk formed by the gamma and epsilon chains, while a peripheral stalk is formed by the delta and b chains.

The protein resides in the cell membrane. F(1)F(0) ATP synthase produces ATP from ADP in the presence of a proton or sodium gradient. F-type ATPases consist of two structural domains, F(1) containing the extramembraneous catalytic core and F(0) containing the membrane proton channel, linked together by a central stalk and a peripheral stalk. During catalysis, ATP synthesis in the catalytic domain of F(1) is coupled via a rotary mechanism of the central stalk subunits to proton translocation. Functionally, this protein is part of the stalk that links CF(0) to CF(1). It either transmits conformational changes from CF(0) to CF(1) or is implicated in proton conduction. The polypeptide is ATP synthase subunit delta (Acetivibrio thermocellus (strain ATCC 27405 / DSM 1237 / JCM 9322 / NBRC 103400 / NCIMB 10682 / NRRL B-4536 / VPI 7372) (Clostridium thermocellum)).